A 289-amino-acid chain; its full sequence is ATP synthase gamma chain (289 aa).

This sequence belongs to the ATPase gamma chain family. In terms of assembly, F-type ATPases have 2 components, CF(1) - the catalytic core - and CF(0) - the membrane proton channel. CF(1) has five subunits: alpha(3), beta(3), gamma(1), delta(1), epsilon(1). CF(0) has three main subunits: a, b and c.

Its subcellular location is the cell inner membrane. Produces ATP from ADP in the presence of a proton gradient across the membrane. The gamma chain is believed to be important in regulating ATPase activity and the flow of protons through the CF(0) complex. The protein is ATP synthase gamma chain of Coxiella burnetii (strain Dugway 5J108-111).